We begin with the raw amino-acid sequence, 690 residues long: Calpain-9 (690 aa).

The segment at 1-23 (MPYLHRSLRPQPQPVPGDARTIH) is disordered. In terms of domain architecture, Calpain catalytic spans 42-337 (LFEDADFPAS…FDKVEICNLT (296 aa)). Ca(2+) contacts are provided by leucine 81, glycine 83, and aspartate 88. Cysteine 97 is an active-site residue. Glutamate 167 contacts Ca(2+). Active-site residues include histidine 254 and asparagine 278. Glutamate 284, aspartate 291, leucine 312, aspartate 314, and glutamate 316 together coordinate Ca(2+). The segment at 338–521 (PDALEDSALH…PQEEETEEEQ (184 aa)) is domain III. 3 consecutive EF-hand domains span residues 518–552 (EEEQ…VLQK), 561–589 (LSLL…FRVF), and 591–626 (DKLK…AGFQ). Residues 522–690 (QFRALFQRVA…NEFISLTMNI (169 aa)) form a domain IV region. Ca(2+) contacts are provided by aspartate 574, serine 576, asparagine 578, lysine 580, glutamate 585, aspartate 604, aspartate 606, serine 608, threonine 610, and glutamate 615.

This sequence belongs to the peptidase C2 family. Predominantly expressed in stomach and small intestine, although low levels of expression in other organs.

It localises to the cytoplasm. Functionally, calcium-regulated non-lysosomal thiol-protease. The polypeptide is Calpain-9 (Capn9) (Mus musculus (Mouse)).